Here is a 160-residue protein sequence, read N- to C-terminus: Cyclic pyranopterin monophosphate synthase (160 aa).

Substrate contacts are provided by residues 75-77 and 115-116; these read MCH and ME. Aspartate 130 is a catalytic residue.

This sequence belongs to the MoaC family. In terms of assembly, homohexamer; trimer of dimers.

It catalyses the reaction (8S)-3',8-cyclo-7,8-dihydroguanosine 5'-triphosphate = cyclic pyranopterin phosphate + diphosphate. It functions in the pathway cofactor biosynthesis; molybdopterin biosynthesis. Functionally, catalyzes the conversion of (8S)-3',8-cyclo-7,8-dihydroguanosine 5'-triphosphate to cyclic pyranopterin monophosphate (cPMP). The sequence is that of Cyclic pyranopterin monophosphate synthase from Lysinibacillus sphaericus (strain C3-41).